We begin with the raw amino-acid sequence, 581 residues long: Kelch-like protein 38 (581 aa).

A BTB domain is found at 34–101 (TDVSICSGAW…VYTGEVHISA (68 aa)). One can recognise a BACK domain in the interval 136-237 (CLGLVRLAEI…HPAFFHHFIA (102 aa)). 6 Kelch repeats span residues 285-332 (FLLL…TLHR), 334-383 (VYVL…THRN), 384-431 (FIFS…VKDQ), 433-479 (LYLF…VLGE), 480-521 (QIVI…VMGN), and 523-573 (LYVT…TLQC).

The sequence is that of Kelch-like protein 38 (Klhl38) from Mus musculus (Mouse).